Reading from the N-terminus, the 435-residue chain is Methylenetetrahydrofolate--tRNA-(uracil-5-)-methyltransferase TrmFO (435 aa).

7-12 (GAGLAG) is a binding site for FAD.

The protein belongs to the MnmG family. TrmFO subfamily. Requires FAD as cofactor.

It is found in the cytoplasm. The enzyme catalyses uridine(54) in tRNA + (6R)-5,10-methylene-5,6,7,8-tetrahydrofolate + NADH + H(+) = 5-methyluridine(54) in tRNA + (6S)-5,6,7,8-tetrahydrofolate + NAD(+). It carries out the reaction uridine(54) in tRNA + (6R)-5,10-methylene-5,6,7,8-tetrahydrofolate + NADPH + H(+) = 5-methyluridine(54) in tRNA + (6S)-5,6,7,8-tetrahydrofolate + NADP(+). Catalyzes the folate-dependent formation of 5-methyl-uridine at position 54 (M-5-U54) in all tRNAs. This is Methylenetetrahydrofolate--tRNA-(uracil-5-)-methyltransferase TrmFO from Thermotoga neapolitana (strain ATCC 49049 / DSM 4359 / NBRC 107923 / NS-E).